A 324-amino-acid chain; its full sequence is Adenine deaminase (324 aa).

3 residues coordinate Zn(2+): H11, H13, and H189. E192 (proton donor) is an active-site residue. D270 contacts Zn(2+). Substrate is bound at residue D271.

Belongs to the metallo-dependent hydrolases superfamily. Adenosine and AMP deaminases family. Adenine deaminase type 2 subfamily. Requires Zn(2+) as cofactor.

The catalysed reaction is adenine + H2O + H(+) = hypoxanthine + NH4(+). Catalyzes the hydrolytic deamination of adenine to hypoxanthine. Plays an important role in the purine salvage pathway and in nitrogen catabolism. The polypeptide is Adenine deaminase (Sinorhizobium fredii (strain NBRC 101917 / NGR234)).